Consider the following 860-residue polypeptide: Leucine--tRNA ligase (860 aa).

The short motif at 42–52 is the 'HIGH' region element; it reads PYPSGRLHMGH. A 'KMSKS' region motif is present at residues 619–623; sequence KMSKS. Lys-622 provides a ligand contact to ATP.

This sequence belongs to the class-I aminoacyl-tRNA synthetase family.

The protein resides in the cytoplasm. It carries out the reaction tRNA(Leu) + L-leucine + ATP = L-leucyl-tRNA(Leu) + AMP + diphosphate. The protein is Leucine--tRNA ligase of Escherichia coli O17:K52:H18 (strain UMN026 / ExPEC).